The sequence spans 117 residues: Large ribosomal subunit protein bL20 (117 aa).

This sequence belongs to the bacterial ribosomal protein bL20 family.

In terms of biological role, binds directly to 23S ribosomal RNA and is necessary for the in vitro assembly process of the 50S ribosomal subunit. It is not involved in the protein synthesizing functions of that subunit. The chain is Large ribosomal subunit protein bL20 from Idiomarina loihiensis (strain ATCC BAA-735 / DSM 15497 / L2-TR).